Consider the following 147-residue polypeptide: Large ribosomal subunit protein bL21 (147 aa).

Positions 115 to 147 are disordered; that stretch reads KSIKVGKPTPKSSSKKEETVKKETKPKSEKSTN. Over residues 128–147 the composition is skewed to basic and acidic residues; it reads SKKEETVKKETKPKSEKSTN.

Belongs to the bacterial ribosomal protein bL21 family. In terms of assembly, part of the 50S ribosomal subunit. Contacts protein L20.

Its function is as follows. This protein binds to 23S rRNA in the presence of protein L20. This Prochlorococcus marinus (strain MIT 9215) protein is Large ribosomal subunit protein bL21.